The primary structure comprises 320 residues: o-succinylbenzoate synthase (320 aa).

K133 (proton donor) is an active-site residue. Residues D161, E190, and D213 each coordinate Mg(2+). Residue K235 is the Proton acceptor of the active site.

This sequence belongs to the mandelate racemase/muconate lactonizing enzyme family. MenC type 1 subfamily. A divalent metal cation serves as cofactor.

The enzyme catalyses (1R,6R)-6-hydroxy-2-succinyl-cyclohexa-2,4-diene-1-carboxylate = 2-succinylbenzoate + H2O. It participates in quinol/quinone metabolism; 1,4-dihydroxy-2-naphthoate biosynthesis; 1,4-dihydroxy-2-naphthoate from chorismate: step 4/7. It functions in the pathway quinol/quinone metabolism; menaquinone biosynthesis. Its function is as follows. Converts 2-succinyl-6-hydroxy-2,4-cyclohexadiene-1-carboxylate (SHCHC) to 2-succinylbenzoate (OSB). The sequence is that of o-succinylbenzoate synthase from Salmonella typhi.